The chain runs to 588 residues: MSDKKQKGLEWQDNPLSDNERLKEESNHLRGTILDDLEDGLTGGFKGDNFQLIRFHGMYEQDDRDIRAERQEEKLEPRKFMLLRCRLPGGIIKPEQWIEIDKFARDNNYYQSIRLTNRQTFQYHGVPKTKLQDMHRLLHKLGLDSIATASDMNRNVLCSSNPVESELHQEAYEWAKKISEHLLPRTNGYLDVWISGKKVQSSDSFLGQEDEPILGNRYLPRKYKTAVVLPPLNDVDLYSNDMNFVGIKDEKTGKLAGFNVLVGGGLSFEHGNTKTYPNIALELGYVPVEDTLKAAESIVTTQRDFGNRADRKNARLRYTIQNMTLEGFREEVERRMGRRFEAIRPFEFTERGDRIGWVKGIDKKWHLTCFIESGRLVDKPDLPLMTGMLELAKVHKGDFRITANQNIIIANVAEEDKRQIEDIARQYGLIRKITKLRENAMSCVSFPTCPLAMAESERVLPEFIDELDKIMAKHHVEQDYIVTRITGCPNGCGRAMLAEIGLVGKAVGRYNLHLGGNIAGTRIPRLYKENITLDEILSELDGLIARWATERDQGEGFGDFVLRVGIIKPVVNPVVDFWDENLIPTVAV.

Basic and acidic residues predominate over residues 1–10 (MSDKKQKGLE). The tract at residues 1 to 20 (MSDKKQKGLEWQDNPLSDNE) is disordered. [4Fe-4S] cluster is bound by residues Cys443, Cys449, Cys488, and Cys492. Cys492 contributes to the siroheme binding site.

This sequence belongs to the nitrite and sulfite reductase 4Fe-4S domain family. As to quaternary structure, alpha(8)-beta(8). The alpha component is a flavoprotein, the beta component is a hemoprotein. Siroheme is required as a cofactor. Requires [4Fe-4S] cluster as cofactor.

It carries out the reaction hydrogen sulfide + 3 NADP(+) + 3 H2O = sulfite + 3 NADPH + 4 H(+). It functions in the pathway sulfur metabolism; hydrogen sulfide biosynthesis; hydrogen sulfide from sulfite (NADPH route): step 1/1. In terms of biological role, component of the sulfite reductase complex that catalyzes the 6-electron reduction of sulfite to sulfide. This is one of several activities required for the biosynthesis of L-cysteine from sulfate. The protein is Sulfite reductase [NADPH] hemoprotein beta-component of Mannheimia succiniciproducens (strain KCTC 0769BP / MBEL55E).